Reading from the N-terminus, the 156-residue chain is Small ribosomal subunit protein uS7 (156 aa).

The protein belongs to the universal ribosomal protein uS7 family. As to quaternary structure, part of the 30S ribosomal subunit. Contacts proteins S9 and S11.

In terms of biological role, one of the primary rRNA binding proteins, it binds directly to 16S rRNA where it nucleates assembly of the head domain of the 30S subunit. Is located at the subunit interface close to the decoding center, probably blocks exit of the E-site tRNA. The sequence is that of Small ribosomal subunit protein uS7 from Parafrankia sp. (strain EAN1pec).